The following is a 31-amino-acid chain: Cyclotide glopa C (31 aa).

The segment at residues 1 to 31 (GDLPICGETCFEGGNCRIPGCTCVWPFCSKN) is a cross-link (cyclopeptide (Gly-Asn)). Disulfide bonds link C6–C21, C10–C23, and C16–C28.

This is a cyclic peptide.

Functionally, probably participates in a plant defense mechanism. The chain is Cyclotide glopa C from Gloeospermum pauciflorum.